Consider the following 475-residue polypeptide: Nucleoporin-like protein amo1 (475 aa).

A C3H1-type zinc finger spans residues 1 to 25 (MVVCKYFLQNRCRYGTNCKNQHTVP). Over residues 165–182 (DKSTSNSTVTSNQFNKPT) the composition is skewed to polar residues. 2 disordered regions span residues 165–208 (DKST…DIFG) and 220–252 (NASP…SSFG). The span at 183–204 (QNSPFNSFSNNNNSFNNNQQAN) shows a compositional bias: low complexity. Residues 220–242 (NASPFSQNTSSNSFTGSNPVQNN) show a composition bias toward polar residues. The segment covering 243 to 252 (PSSFGSSSFG) has biased composition (low complexity).

The protein localises to the nucleus. In terms of biological role, involved in the cell polarity process where it is required for the correct termination of microtubule growth at the cell ends during interphase. This Schizosaccharomyces pombe (strain 972 / ATCC 24843) (Fission yeast) protein is Nucleoporin-like protein amo1 (amo1).